A 338-amino-acid chain; its full sequence is Heat-inducible transcription repressor HrcA (338 aa).

It belongs to the HrcA family.

Its function is as follows. Negative regulator of class I heat shock genes (grpE-dnaK-dnaJ and groELS operons). Prevents heat-shock induction of these operons. This is Heat-inducible transcription repressor HrcA from Bacillus cereus (strain AH187).